The sequence spans 1536 residues: Ferredoxin-dependent glutamate synthase (1536 aa).

Residue Cys27 is the For GATase activity of the active site. Residues 27-427 form the Glutamine amidotransferase type-2 domain; it reads CGVGFIANLN…PGQMLCVDLS (401 aa). FMN is bound at residue 1105–1162; the sequence is LAEVHTTLVENSLREKVILRVDGGLRTGKDIIIAALMGAEEFGFGTVAMIATGCVMAR. [3Fe-4S] cluster is bound by residues Cys1158, Cys1164, and Cys1169.

The protein belongs to the glutamate synthase family. Monomer. [3Fe-4S] cluster serves as cofactor. Requires FAD as cofactor. It depends on FMN as a cofactor.

It localises to the plastid. The protein localises to the chloroplast stroma. The catalysed reaction is 2 oxidized [2Fe-2S]-[ferredoxin] + 2 L-glutamate = L-glutamine + 2 reduced [2Fe-2S]-[ferredoxin] + 2-oxoglutarate + 2 H(+). Its pathway is amino-acid biosynthesis; L-glutamate biosynthesis via GLT pathway; L-glutamate from 2-oxoglutarate and L-glutamine (ferredoxin route): step 1/1. The protein operates within energy metabolism; nitrogen metabolism. The protein is Ferredoxin-dependent glutamate synthase (gltB) of Antithamnion sp. (Red alga).